A 78-amino-acid chain; its full sequence is D-alanyl carrier protein (78 aa).

Positions 1–77 (MAVKEEVVEI…KVIAKVESLI (77 aa)) constitute a Carrier domain. The residue at position 35 (serine 35) is an O-(pantetheine 4'-phosphoryl)serine.

It belongs to the DltC family. 4'-phosphopantetheine is transferred from CoA to a specific serine of apo-DCP.

The protein resides in the cytoplasm. It participates in cell wall biogenesis; lipoteichoic acid biosynthesis. Its function is as follows. Carrier protein involved in the D-alanylation of lipoteichoic acid (LTA). The loading of thioester-linked D-alanine onto DltC is catalyzed by D-alanine--D-alanyl carrier protein ligase DltA. The DltC-carried D-alanyl group is further transferred to cell membrane phosphatidylglycerol (PG) by forming an ester bond, probably catalyzed by DltD. D-alanylation of LTA plays an important role in modulating the properties of the cell wall in Gram-positive bacteria, influencing the net charge of the cell wall. This is D-alanyl carrier protein from Leuconostoc citreum (strain KM20).